The primary structure comprises 179 residues: Protein YjaZ (179 aa).

The chain is Protein YjaZ from Escherichia coli (strain K12).